The following is a 214-amino-acid chain: UPF0301 protein blr1492 (214 aa).

A disordered region spans residues 1 to 22; the sequence is MAPTGKRTGESTRSTGPAPPSS.

This sequence belongs to the UPF0301 (AlgH) family.

In Bradyrhizobium diazoefficiens (strain JCM 10833 / BCRC 13528 / IAM 13628 / NBRC 14792 / USDA 110), this protein is UPF0301 protein blr1492.